The following is a 269-amino-acid chain: Glutamate racemase (269 aa).

Residues 11 to 12 and 43 to 44 each bind substrate; these read DS and YG. Cysteine 74 functions as the Proton donor/acceptor in the catalytic mechanism. 75 to 76 contacts substrate; the sequence is NT. Cysteine 185 serves as the catalytic Proton donor/acceptor. Position 186–187 (186–187) interacts with substrate; it reads TH.

This sequence belongs to the aspartate/glutamate racemases family.

The enzyme catalyses L-glutamate = D-glutamate. It functions in the pathway cell wall biogenesis; peptidoglycan biosynthesis. Functionally, provides the (R)-glutamate required for cell wall biosynthesis. This chain is Glutamate racemase, found in Bacillus cereus (strain ATCC 10987 / NRS 248).